The sequence spans 211 residues: Small ribosomal subunit protein uS3 (211 aa).

Residues 38–106 (LRKFIKKAFY…NIELNIIEVK (69 aa)) enclose the KH type-2 domain.

The protein belongs to the universal ribosomal protein uS3 family. Part of the 30S ribosomal subunit. Forms a tight complex with proteins S10 and S14.

Its function is as follows. Binds the lower part of the 30S subunit head. Binds mRNA in the 70S ribosome, positioning it for translation. The sequence is that of Small ribosomal subunit protein uS3 from Ehrlichia chaffeensis (strain ATCC CRL-10679 / Arkansas).